Here is a 273-residue protein sequence, read N- to C-terminus: Putative tyrosine-protein phosphatase H16_A0669 (273 aa).

Residues M1–A15 form the signal peptide. C169 (phosphocysteine intermediate) is an active-site residue.

Belongs to the protein-tyrosine phosphatase family.

The enzyme catalyses O-phospho-L-tyrosyl-[protein] + H2O = L-tyrosyl-[protein] + phosphate. The chain is Putative tyrosine-protein phosphatase H16_A0669 from Cupriavidus necator (strain ATCC 17699 / DSM 428 / KCTC 22496 / NCIMB 10442 / H16 / Stanier 337) (Ralstonia eutropha).